A 156-amino-acid polypeptide reads, in one-letter code: Small ribosomal subunit protein uS7 (156 aa).

This sequence belongs to the universal ribosomal protein uS7 family. In terms of assembly, part of the 30S ribosomal subunit. Contacts proteins S9 and S11.

Functionally, one of the primary rRNA binding proteins, it binds directly to 16S rRNA where it nucleates assembly of the head domain of the 30S subunit. Is located at the subunit interface close to the decoding center, probably blocks exit of the E-site tRNA. This Aromatoleum aromaticum (strain DSM 19018 / LMG 30748 / EbN1) (Azoarcus sp. (strain EbN1)) protein is Small ribosomal subunit protein uS7.